We begin with the raw amino-acid sequence, 304 residues long: Probable alpha-L-glutamate ligase 2 (304 aa).

The ATP-grasp domain occupies 107–290 (HQLLARKGVG…IAGAIIDYIV (184 aa)). Residues lysine 144, 181–182 (EF), aspartate 190, and 214–216 (RSN) each bind ATP. The Mg(2+) site is built by aspartate 251, glutamate 263, and asparagine 265. Residues aspartate 251, glutamate 263, and asparagine 265 each coordinate Mn(2+).

The protein belongs to the RimK family. The cofactor is Mg(2+). Requires Mn(2+) as cofactor.

The polypeptide is Probable alpha-L-glutamate ligase 2 (Hahella chejuensis (strain KCTC 2396)).